An 828-amino-acid chain; its full sequence is Glycerol-3-phosphate acyltransferase 1, mitochondrial (828 aa).

Over 1 to 87 the chain is Cytoplasmic; sequence MDESALTLGT…FFNPSIPSLG (87 aa). Residues 80–120 form an important for mitochondrial localization region; it reads NPSIPSLGLRNVIYINETHTRHRGWLARRLSYVLFIQERDV. An intramembrane segment occupies 88–118; sequence LRNVIYINETHTRHRGWLARRLSYVLFIQER. The Cytoplasmic portion of the chain corresponds to 119-828; sequence DVHKGMFATN…LEYILSFVVL (710 aa). The HXXXXD motif signature appears at 230-235; it reads HRSHID. Residues arginine 278, arginine 279, lysine 288, arginine 293, and arginine 328 each contribute to the CoA site. Serine 380 is modified (phosphoserine). Residues 435-455 form a disordered region; the sequence is SRPSDAADEGRDTSINESRNA. Residues 442–455 are compositionally biased toward basic and acidic residues; sequence DEGRDTSINESRNA. CoA is bound at residue arginine 462. Serine 688 and serine 695 each carry phosphoserine. N6-acetyllysine is present on residues lysine 780 and lysine 784.

Belongs to the GPAT/DAPAT family.

Its subcellular location is the mitochondrion outer membrane. The catalysed reaction is sn-glycerol 3-phosphate + an acyl-CoA = a 1-acyl-sn-glycero-3-phosphate + CoA. It carries out the reaction (9Z,12Z)-octadecadienoyl-CoA + sn-glycerol 3-phosphate = 1-(9Z,12Z)-octadecadienoyl-sn-glycero-3-phosphate + CoA. The enzyme catalyses sn-glycerol 3-phosphate + (9Z)-octadecenoyl-CoA = 1-(9Z-octadecenoyl)-sn-glycero-3-phosphate + CoA. It catalyses the reaction sn-glycerol 3-phosphate + octadecanoyl-CoA = 1-octadecanoyl-sn-glycero-3-phosphate + CoA. The catalysed reaction is sn-glycerol 3-phosphate + hexadecanoyl-CoA = 1-hexadecanoyl-sn-glycero-3-phosphate + CoA. It carries out the reaction dodecanoyl-CoA + sn-glycerol 3-phosphate = 1-dodecanoyl-sn-glycerol 3-phosphate + CoA. The enzyme catalyses 1-acyl-sn-glycero-3-phospho-(1'-sn-glycerol) + an acyl-CoA = a 1,2-diacyl-sn-glycero-3-phospho-(1'-sn-glycerol) + CoA. It participates in phospholipid metabolism; CDP-diacylglycerol biosynthesis; CDP-diacylglycerol from sn-glycerol 3-phosphate: step 1/3. Its function is as follows. Mitochondrial membrane protein that catalyzes the essential first step of biosynthesis of glycerolipids such as triglycerides, phosphatidic acids and lysophosphatidic acids. Esterifies acyl-group from acyl-coenzyme A (acyl-CoA) to the sn-1 position of glycerol-3-phosphate, to produce lysophosphatidic acid. Has a narrow hydrophobic binding cleft that selects for a linear acyl chain. Catalytic activity is higher for substrates with a 16-carbon acyl chain. In Homo sapiens (Human), this protein is Glycerol-3-phosphate acyltransferase 1, mitochondrial.